The following is a 504-amino-acid chain: Galactose/methyl galactoside import ATP-binding protein MglA (504 aa).

2 consecutive ABC transporter domains span residues 8–247 (LEMN…VGRD) and 258–504 (TPGE…TRFI). 40–47 (GENGAGKS) lines the ATP pocket.

Belongs to the ABC transporter superfamily. Galactose/methyl galactoside importer (TC 3.A.1.2.3) family. As to quaternary structure, the complex is composed of one ATP-binding protein (MglA), two transmembrane proteins (MglC) and a solute-binding protein (MglB).

It is found in the cell membrane. The enzyme catalyses D-galactose(out) + ATP + H2O = D-galactose(in) + ADP + phosphate + H(+). The catalysed reaction is methyl beta-D-galactoside(out) + ATP + H2O = methyl beta-D-galactoside(in) + ADP + phosphate + H(+). Functionally, part of the ABC transporter complex MglABC involved in galactose/methyl galactoside import. Responsible for energy coupling to the transport system. This Clostridium tetani (strain Massachusetts / E88) protein is Galactose/methyl galactoside import ATP-binding protein MglA.